We begin with the raw amino-acid sequence, 483 residues long: Altronate oxidoreductase (483 aa).

18-29 (IIQFGEGNFLRA) lines the NAD(+) pocket.

Belongs to the mannitol dehydrogenase family. UxaB subfamily.

It catalyses the reaction D-altronate + NAD(+) = keto-D-tagaturonate + NADH + H(+). It participates in carbohydrate metabolism; pentose and glucuronate interconversion. The polypeptide is Altronate oxidoreductase (Enterobacter sp. (strain 638)).